A 450-amino-acid polypeptide reads, in one-letter code: MAVHPIDYRYGSEEMRKIWDEKNKLQKLLDVEAALARAHAKVGNIPEESAKVISERANTKWVKLERVKEIEAEIHHDIMAVVKALSEVCGEHGKYVHLGATSNDIIDTANALLIKESLEIVERDLKELRSILKQLAEKHIGTVCIGRTHGQHAVPTTYGMKFALWLDEIQRHIERLYQLKERVLVGKMRGAVGTAASFGEKAFEIERLVMEDLGLKPARITNQIVQRDVYAELLFFLALVASTLDKMGLEIRNLQRTEILEVSEPFGEKQVGSSTMPHKRNPIRTEKVCGLARVLYSNVIPALLNNPLWHERDLTNSSVERVILPESFVLLDEMLKTMKKVLTGLEFFPENIRRNLYLTKNLIMAEPLMLKLAEKGMGRQEAHEVVRQLAMKAFRENRDLLEVAKESREITKYLTERDLEELKPENYIGKAREIVKKVIEYVEEMERRGL.

N(6)-(1,2-dicarboxyethyl)-AMP contacts are provided by residues 9 to 10 (RY), 75 to 77 (HHD), and 101 to 102 (TS). The active-site Proton donor/acceptor is His149. Residue Gln223 participates in N(6)-(1,2-dicarboxyethyl)-AMP binding. Ser273 serves as the catalytic Proton donor/acceptor. N(6)-(1,2-dicarboxyethyl)-AMP-binding positions include Ser274, 279–281 (KRN), and 318–322 (SVERV).

The protein belongs to the lyase 1 family. Adenylosuccinate lyase subfamily. In terms of assembly, homotetramer. Residues from neighboring subunits contribute catalytic and substrate-binding residues to each active site.

It catalyses the reaction N(6)-(1,2-dicarboxyethyl)-AMP = fumarate + AMP. The enzyme catalyses (2S)-2-[5-amino-1-(5-phospho-beta-D-ribosyl)imidazole-4-carboxamido]succinate = 5-amino-1-(5-phospho-beta-D-ribosyl)imidazole-4-carboxamide + fumarate. The protein operates within purine metabolism; AMP biosynthesis via de novo pathway; AMP from IMP: step 2/2. Its pathway is purine metabolism; IMP biosynthesis via de novo pathway; 5-amino-1-(5-phospho-D-ribosyl)imidazole-4-carboxamide from 5-amino-1-(5-phospho-D-ribosyl)imidazole-4-carboxylate: step 2/2. Functionally, catalyzes two reactions in de novo purine nucleotide biosynthesis. Catalyzes the breakdown of 5-aminoimidazole- (N-succinylocarboxamide) ribotide (SAICAR or 2-[5-amino-1-(5-phospho-beta-D-ribosyl)imidazole-4-carboxamido]succinate) to 5-aminoimidazole-4-carboxamide ribotide (AICAR or 5-amino-1-(5-phospho-beta-D-ribosyl)imidazole-4-carboxamide) and fumarate, and of adenylosuccinate (ADS or N(6)-(1,2-dicarboxyethyl)-AMP) to adenosine monophosphate (AMP) and fumarate. The sequence is that of Adenylosuccinate lyase (purB) from Pyrococcus horikoshii (strain ATCC 700860 / DSM 12428 / JCM 9974 / NBRC 100139 / OT-3).